A 447-amino-acid polypeptide reads, in one-letter code: ATP-dependent protease ATPase subunit HslU (447 aa).

Residues Ile-17, Gly-59–Glu-64, Asp-256, Glu-321, and Arg-393 each bind ATP.

It belongs to the ClpX chaperone family. HslU subfamily. In terms of assembly, a double ring-shaped homohexamer of HslV is capped on each side by a ring-shaped HslU homohexamer. The assembly of the HslU/HslV complex is dependent on binding of ATP.

It localises to the cytoplasm. Functionally, ATPase subunit of a proteasome-like degradation complex; this subunit has chaperone activity. The binding of ATP and its subsequent hydrolysis by HslU are essential for unfolding of protein substrates subsequently hydrolyzed by HslV. HslU recognizes the N-terminal part of its protein substrates and unfolds these before they are guided to HslV for hydrolysis. This chain is ATP-dependent protease ATPase subunit HslU, found in Pseudomonas putida (strain ATCC 47054 / DSM 6125 / CFBP 8728 / NCIMB 11950 / KT2440).